A 185-amino-acid polypeptide reads, in one-letter code: Large ribosomal subunit protein uL22 (185 aa).

The protein belongs to the universal ribosomal protein uL22 family. As to quaternary structure, part of the 50S ribosomal subunit.

In terms of biological role, this protein binds specifically to 23S rRNA. It makes multiple contacts with different domains of the 23S rRNA in the assembled 50S subunit and ribosome. The globular domain of the protein is located near the polypeptide exit tunnel on the outside of the subunit, while an extended beta-hairpin is found that lines the wall of the exit tunnel in the center of the 70S ribosome. The sequence is that of Large ribosomal subunit protein uL22 from Caldivirga maquilingensis (strain ATCC 700844 / DSM 13496 / JCM 10307 / IC-167).